The following is a 223-amino-acid chain: Phosphoribosylformylglycinamidine synthase subunit PurQ (223 aa).

The Glutamine amidotransferase type-1 domain maps to 3–223 (FAVLVFPGSN…MVKSWREQHV (221 aa)). C85 serves as the catalytic Nucleophile. Active-site residues include H193 and E195.

As to quaternary structure, part of the FGAM synthase complex composed of 1 PurL, 1 PurQ and 2 PurS subunits.

It localises to the cytoplasm. It catalyses the reaction N(2)-formyl-N(1)-(5-phospho-beta-D-ribosyl)glycinamide + L-glutamine + ATP + H2O = 2-formamido-N(1)-(5-O-phospho-beta-D-ribosyl)acetamidine + L-glutamate + ADP + phosphate + H(+). The catalysed reaction is L-glutamine + H2O = L-glutamate + NH4(+). It participates in purine metabolism; IMP biosynthesis via de novo pathway; 5-amino-1-(5-phospho-D-ribosyl)imidazole from N(2)-formyl-N(1)-(5-phospho-D-ribosyl)glycinamide: step 1/2. Functionally, part of the phosphoribosylformylglycinamidine synthase complex involved in the purines biosynthetic pathway. Catalyzes the ATP-dependent conversion of formylglycinamide ribonucleotide (FGAR) and glutamine to yield formylglycinamidine ribonucleotide (FGAM) and glutamate. The FGAM synthase complex is composed of three subunits. PurQ produces an ammonia molecule by converting glutamine to glutamate. PurL transfers the ammonia molecule to FGAR to form FGAM in an ATP-dependent manner. PurS interacts with PurQ and PurL and is thought to assist in the transfer of the ammonia molecule from PurQ to PurL. This Staphylococcus aureus (strain USA300) protein is Phosphoribosylformylglycinamidine synthase subunit PurQ.